A 338-amino-acid chain; its full sequence is MDPPFNEIYNNLLYNQITKKDNDVSEIPFSFSVTAVVEEVELPVIDVSRLIDGAEEEREKCKEAIARASREWGFFQVINHGISMDVLEKMRQEQIRVFREPFDKKSKSEKFSAGSYRWGTPSATSIRQLSWSEAFHVPMTDISDNKDFTTLSSTMEKFASESEALAYMLAEVLAEKSGQNSSFFKENCVRNTCYLRMNRYPPCPKPSEVYGLMPHTDSDFLTILYQDQVGGLQLIKDNRWIAVKPNPKALIINIGDLFQAWSNGMYKSVEHRVMTNPKVERFSTAYFMCPSYDAVIECSSDRPAYRNFSFREFRQQVQEDVKKFGFKVGLPRFLNHVY.

A Fe2OG dioxygenase domain is found at asparagine 191–proline 290. Fe cation is bound by residues histidine 215, aspartate 217, and histidine 271. Arginine 281 is an active-site residue. A 2-oxoglutarate-binding site is contributed by arginine 281.

This sequence belongs to the iron/ascorbate-dependent oxidoreductase family. GA2OX subfamily. Fe(2+) serves as cofactor.

It carries out the reaction gibberellin A1 + 2-oxoglutarate + O2 = gibberellin A8 + succinate + CO2. The protein operates within plant hormone biosynthesis; gibberellin biosynthesis. Its function is as follows. Catalyzes the 2-beta-hydroxylation of gibberellins (GA) precursors, rendering them unable to be converted to active GAs. Hydroxylates the C20-GA GA12 and GA53, but is not active on C19-GAs, like GA1, GA4, GA9 and GA20. The chain is Gibberellin 2-beta-dioxygenase 8 (GA2OX8) from Arabidopsis thaliana (Mouse-ear cress).